The chain runs to 334 residues: Phospho-N-acetylmuramoyl-pentapeptide-transferase (334 aa).

Helical transmembrane passes span 2-22 (IPVL…GPVV), 55-75 (VIFL…PGGV), 78-98 (GWIE…LGFM), 116-136 (EKLL…VFVL), 154-174 (GLAL…VVLA), 187-207 (GLAA…ALVM), 211-231 (WVGI…CYNF), 236-256 (VFMG…AAVI), 262-282 (FLLI…IQVI), and 311-331 (VVLT…AGLK).

It belongs to the glycosyltransferase 4 family. MraY subfamily. The cofactor is Mg(2+).

It localises to the cell membrane. It carries out the reaction UDP-N-acetyl-alpha-D-muramoyl-L-alanyl-gamma-D-glutamyl-meso-2,6-diaminopimeloyl-D-alanyl-D-alanine + di-trans,octa-cis-undecaprenyl phosphate = di-trans,octa-cis-undecaprenyl diphospho-N-acetyl-alpha-D-muramoyl-L-alanyl-D-glutamyl-meso-2,6-diaminopimeloyl-D-alanyl-D-alanine + UMP. Its pathway is cell wall biogenesis; peptidoglycan biosynthesis. Catalyzes the initial step of the lipid cycle reactions in the biosynthesis of the cell wall peptidoglycan: transfers peptidoglycan precursor phospho-MurNAc-pentapeptide from UDP-MurNAc-pentapeptide onto the lipid carrier undecaprenyl phosphate, yielding undecaprenyl-pyrophosphoryl-MurNAc-pentapeptide, known as lipid I. The protein is Phospho-N-acetylmuramoyl-pentapeptide-transferase of Desulforudis audaxviator (strain MP104C).